The chain runs to 313 residues: Ribosomal RNA small subunit methyltransferase H (313 aa).

Residues 34 to 36, Asp53, Phe80, Asp101, and Gln108 each bind S-adenosyl-L-methionine; that span reads GGH.

It belongs to the methyltransferase superfamily. RsmH family.

It is found in the cytoplasm. The catalysed reaction is cytidine(1402) in 16S rRNA + S-adenosyl-L-methionine = N(4)-methylcytidine(1402) in 16S rRNA + S-adenosyl-L-homocysteine + H(+). Specifically methylates the N4 position of cytidine in position 1402 (C1402) of 16S rRNA. In Lacticaseibacillus casei (strain BL23) (Lactobacillus casei), this protein is Ribosomal RNA small subunit methyltransferase H.